Consider the following 470-residue polypeptide: Nuclear receptor ROR-beta (470 aa).

Residues 18 to 93 constitute a DNA-binding region (nuclear receptor); it reads VIPCKICGDK…LGMSRDAVKF (76 aa). NR C4-type zinc fingers lie at residues 21–41 and 57–81; these read CKIC…CEGC and CPRQ…LQKC. Over residues 104–117 the composition is skewed to basic and acidic residues; sequence LYAEVQKHQQRLQE. The segment at 104 to 127 is disordered; the sequence is LYAEVQKHQQRLQEQRQQQSGEAE. Positions 222–460 constitute an NR LBD domain; it reads EIDRIAQNII…TLFPPLYKEL (239 aa). An AF-2 motif is present at residues 456–461; that stretch reads LYKELF.

The protein belongs to the nuclear hormone receptor family. NR1 subfamily. In terms of assembly, monomer. Interacts with CRX. In terms of tissue distribution, isoform 2 expressed with circadian rhythm in eye and pineal gland. Isoform 1 expressed in retina cortex, thalamus, and hypothalamus.

The protein resides in the nucleus. Its subcellular location is the nucleoplasm. Its function is as follows. Nuclear receptor that binds DNA as a monomer to ROR response elements (RORE) containing a single core motif half-site 5'-AGGTCA-3' preceded by a short A-T-rich sequence. Considered to have intrinsic transcriptional activity, have some natural ligands such as all-trans retinoic acid (ATRA) and other retinoids which act as inverse agonists repressing the transcriptional activity. Required for normal postnatal development of rod and cone photoreceptor cells. Modulates rod photoreceptors differentiation at least by inducing the transcription factor NRL-mediated pathway. In cone photoreceptor cells, regulates transcription of OPN1SW. Involved in the regulation of the period length and stability of the circadian rhythm. May control cytoarchitectural patterning of neocortical neurons during development. May act in a dose-dependent manner to regulate barrel formation upon innervation of layer IV neurons by thalamocortical axons. May play a role in the suppression of osteoblastic differentiation through the inhibition of RUNX2 transcriptional activity. In terms of biological role, critical for hindlimb motor control and for the differentiation of amacrine and horizontal cells in the retina. Regulates the expression of PTF1A synergistically with FOXN4. In Rattus norvegicus (Rat), this protein is Nuclear receptor ROR-beta (Rorb).